The sequence spans 418 residues: Imidazolonepropionase (418 aa).

Residues histidine 79 and histidine 81 each coordinate Fe(3+). Zn(2+) is bound by residues histidine 79 and histidine 81. 3 residues coordinate 4-imidazolone-5-propanoate: arginine 88, tyrosine 151, and histidine 184. Tyrosine 151 serves as a coordination point for N-formimidoyl-L-glutamate. Residue histidine 249 coordinates Fe(3+). Histidine 249 serves as a coordination point for Zn(2+). Glutamine 252 lines the 4-imidazolone-5-propanoate pocket. Aspartate 324 provides a ligand contact to Fe(3+). Aspartate 324 contacts Zn(2+). Asparagine 326 and glycine 328 together coordinate N-formimidoyl-L-glutamate. Threonine 329 contacts 4-imidazolone-5-propanoate.

It belongs to the metallo-dependent hydrolases superfamily. HutI family. Zn(2+) serves as cofactor. Fe(3+) is required as a cofactor.

It is found in the cytoplasm. The enzyme catalyses 4-imidazolone-5-propanoate + H2O = N-formimidoyl-L-glutamate. Its pathway is amino-acid degradation; L-histidine degradation into L-glutamate; N-formimidoyl-L-glutamate from L-histidine: step 3/3. Its function is as follows. Catalyzes the hydrolytic cleavage of the carbon-nitrogen bond in imidazolone-5-propanoate to yield N-formimidoyl-L-glutamate. It is the third step in the universal histidine degradation pathway. The polypeptide is Imidazolonepropionase (Colwellia psychrerythraea (strain 34H / ATCC BAA-681) (Vibrio psychroerythus)).